Here is an 81-residue protein sequence, read N- to C-terminus: Defensin-like protein 266 (81 aa).

The first 26 residues, 1 to 26 (MEKIVFRKIVFVAFLLSLSCLLEGEA), serve as a signal peptide directing secretion. 3 disulfides stabilise this stretch: Cys-40-Cys-58, Cys-46-Cys-63, and Cys-50-Cys-65.

It belongs to the DEFL family.

It localises to the secreted. This chain is Defensin-like protein 266, found in Arabidopsis thaliana (Mouse-ear cress).